The sequence spans 545 residues: ATP synthase subunit alpha (545 aa).

173-180 (GDRQTGKT) contributes to the ATP binding site.

Belongs to the ATPase alpha/beta chains family. In terms of assembly, F-type ATPases have 2 components, CF(1) - the catalytic core - and CF(0) - the membrane proton channel. CF(1) has five subunits: alpha(3), beta(3), gamma(1), delta(1), epsilon(1). CF(0) has three main subunits: a(1), b(2) and c(9-12). The alpha and beta chains form an alternating ring which encloses part of the gamma chain. CF(1) is attached to CF(0) by a central stalk formed by the gamma and epsilon chains, while a peripheral stalk is formed by the delta and b chains.

Its subcellular location is the cell membrane. The catalysed reaction is ATP + H2O + 4 H(+)(in) = ADP + phosphate + 5 H(+)(out). Functionally, produces ATP from ADP in the presence of a proton gradient across the membrane. The alpha chain is a regulatory subunit. In Paenarthrobacter aurescens (strain TC1), this protein is ATP synthase subunit alpha.